The following is a 100-amino-acid chain: Large ribosomal subunit protein uL23 (100 aa).

Belongs to the universal ribosomal protein uL23 family. Part of the 50S ribosomal subunit. Contacts protein L29, and trigger factor when it is bound to the ribosome.

Functionally, one of the early assembly proteins it binds 23S rRNA. One of the proteins that surrounds the polypeptide exit tunnel on the outside of the ribosome. Forms the main docking site for trigger factor binding to the ribosome. In Aeromonas salmonicida (strain A449), this protein is Large ribosomal subunit protein uL23.